A 192-amino-acid polypeptide reads, in one-letter code: Ion-translocating oxidoreductase complex subunit B (192 aa).

The interval 1-26 is hydrophobic; that stretch reads MNTIWIAVGALTFLGLVFGAILGYAS. In terms of domain architecture, 4Fe-4S spans 32-91; sequence EDDPVVEKIDAILPQSQCGQCGYPGCRPYAEAVGLQGEKINRCAPGGEAVMLKIADLLNV. Residues cysteine 49, cysteine 52, cysteine 57, cysteine 74, cysteine 117, cysteine 120, cysteine 123, cysteine 127, cysteine 147, cysteine 150, cysteine 153, and cysteine 157 each coordinate [4Fe-4S] cluster. 2 consecutive 4Fe-4S ferredoxin-type domains span residues 108 to 137 and 138 to 167; these read MLAV…GATR and AMHT…LRPV.

Belongs to the 4Fe4S bacterial-type ferredoxin family. RnfB subfamily. As to quaternary structure, the complex is composed of six subunits: RsxA, RsxB, RsxC, RsxD, RsxE and RsxG. Requires [4Fe-4S] cluster as cofactor.

The protein resides in the cell inner membrane. In terms of biological role, part of a membrane-bound complex that couples electron transfer with translocation of ions across the membrane. Required to maintain the reduced state of SoxR. This Salmonella arizonae (strain ATCC BAA-731 / CDC346-86 / RSK2980) protein is Ion-translocating oxidoreductase complex subunit B.